A 298-amino-acid chain; its full sequence is Acetyl-coenzyme A carboxylase carboxyl transferase subunit beta (298 aa).

In terms of domain architecture, CoA carboxyltransferase N-terminal spans 41 to 298 (PTIECPECHA…RIVSKLMNLP (258 aa)). The Zn(2+) site is built by C45, C48, C64, and C67. A C4-type zinc finger spans residues 45-67 (CPECHALVTRTAIAFNAYVCPSC).

It belongs to the AccD/PCCB family. In terms of assembly, acetyl-CoA carboxylase is a heterohexamer composed of biotin carboxyl carrier protein (AccB), biotin carboxylase (AccC) and two subunits each of ACCase subunit alpha (AccA) and ACCase subunit beta (AccD). Requires Zn(2+) as cofactor.

Its subcellular location is the cytoplasm. The enzyme catalyses N(6)-carboxybiotinyl-L-lysyl-[protein] + acetyl-CoA = N(6)-biotinyl-L-lysyl-[protein] + malonyl-CoA. It participates in lipid metabolism; malonyl-CoA biosynthesis; malonyl-CoA from acetyl-CoA: step 1/1. Its function is as follows. Component of the acetyl coenzyme A carboxylase (ACC) complex. Biotin carboxylase (BC) catalyzes the carboxylation of biotin on its carrier protein (BCCP) and then the CO(2) group is transferred by the transcarboxylase to acetyl-CoA to form malonyl-CoA. This is Acetyl-coenzyme A carboxylase carboxyl transferase subunit beta from Acinetobacter baylyi (strain ATCC 33305 / BD413 / ADP1).